The sequence spans 592 residues: ATP-dependent lipid A-core flippase (592 aa).

Helical transmembrane passes span 31–51 (LSSF…EGII), 76–96 (AMLV…TYFL), 134–154 (AVIF…ITLV), 161–181 (LALL…VAVI), 261–281 (VTQF…MVQA), and 288–308 (VGGF…LKHL). Residues 35-317 (ILAMVAMGVV…LTDVNQPMQR (283 aa)) form the ABC transmembrane type-1 domain. The ABC transporter domain maps to 349–587 (LRFEHVTFRY…DGLYAGLHRI (239 aa)). 383–390 (GPSGSGKT) is a binding site for ATP.

It belongs to the ABC transporter superfamily. Lipid exporter (TC 3.A.1.106) family. In terms of assembly, homodimer.

It is found in the cell inner membrane. It catalyses the reaction ATP + H2O + lipid A-core oligosaccharideSide 1 = ADP + phosphate + lipid A-core oligosaccharideSide 2.. Functionally, involved in lipopolysaccharide (LPS) biosynthesis. Translocates lipid A-core from the inner to the outer leaflet of the inner membrane. Transmembrane domains (TMD) form a pore in the inner membrane and the ATP-binding domain (NBD) is responsible for energy generation. In Ralstonia nicotianae (strain ATCC BAA-1114 / GMI1000) (Ralstonia solanacearum), this protein is ATP-dependent lipid A-core flippase.